We begin with the raw amino-acid sequence, 353 residues long: Outer membrane protein P5 (353 aa).

A signal peptide spans 1 to 21 (MKKTAIALVVAGLAAASVAQA). The next 8 membrane-spanning stretches (beta stranded) occupy residues 27 to 37 (TFYAGVKAGQA), 58 to 69 (SFTYGVFGGYQI), 77 to 85 (LAVELGYDD), 104 to 115 (HGAHLSLKGSYE), 120 to 128 (LDVYGKAGV), 158 to 167 (GLFAVGAEYA), 172 to 179 (LAVRLEYQ), and 205 to 213 (SINAGISYR). The OmpA-like domain maps to 227–353 (VVSKTFSLNS…RVEIAVNGTK (127 aa)). Cys326 and Cys338 are oxidised to a cystine.

Belongs to the outer membrane OOP (TC 1.B.6) superfamily. OmpA family. In terms of assembly, monomer and homodimer.

The protein resides in the cell outer membrane. With TolR probably plays a role in maintaining the position of the peptidoglycan cell wall in the periplasm. Acts as a porin with low permeability that allows slow penetration of small solutes; an internal gate slows down solute passage. The sequence is that of Outer membrane protein P5 from Haemophilus influenzae.